The chain runs to 170 residues: 3-hydroxydecanoyl-[acyl-carrier-protein] dehydratase (170 aa).

The active site involves His69.

The protein belongs to the thioester dehydratase family. FabA subfamily. In terms of assembly, homodimer.

The protein resides in the cytoplasm. The enzyme catalyses a (3R)-hydroxyacyl-[ACP] = a (2E)-enoyl-[ACP] + H2O. The catalysed reaction is (3R)-hydroxydecanoyl-[ACP] = (2E)-decenoyl-[ACP] + H2O. It catalyses the reaction (2E)-decenoyl-[ACP] = (3Z)-decenoyl-[ACP]. It functions in the pathway lipid metabolism; fatty acid biosynthesis. Functionally, necessary for the introduction of cis unsaturation into fatty acids. Catalyzes the dehydration of (3R)-3-hydroxydecanoyl-ACP to E-(2)-decenoyl-ACP and then its isomerization to Z-(3)-decenoyl-ACP. Can catalyze the dehydratase reaction for beta-hydroxyacyl-ACPs with saturated chain lengths up to 16:0, being most active on intermediate chain length. In Idiomarina loihiensis (strain ATCC BAA-735 / DSM 15497 / L2-TR), this protein is 3-hydroxydecanoyl-[acyl-carrier-protein] dehydratase.